We begin with the raw amino-acid sequence, 424 residues long: MLDQKLIRENPTFVEDNLSLRGKVYDIARIRELSLERKEIDTEISSLQSESKKLSKIIGQEIRNSNINSKELNELKDKGNKYRIKVSEFEEQKRILDKQLQDEISKLPNLPSKDAPLGENENNNIQIKEWGDPLTKDNLKAHWEIGENLNLFDSVKSTKISKSRFITLTGNGARLERALVNFMLDVHSNNGYLELMPPALVNSESLQGSGQLPKFSNESFKCANDDLWLSPTAEVPLTAFHKNEIIDPKILPLKYVAYSPCFRREAGSYGRDTKGLIRLHQFNKVELYWFCHPNKSLEAHKEITADAESILKKLNLPYRSVDICTGDLGFSSSRTFDLEVWLPSSQCYREISSCSNCLDFQARRSSIRTKIDKKTSYIHTLNGSGLAIGRTMAAILENGQQLDGSVKIPDALVPYFGSSFIKTT.

232–234 (TAE) lines the L-serine pocket. 263-265 (RRE) contacts ATP. Glu-286 provides a ligand contact to L-serine. 350 to 353 (EISS) contributes to the ATP binding site. Ser-384 is an L-serine binding site.

Belongs to the class-II aminoacyl-tRNA synthetase family. Type-1 seryl-tRNA synthetase subfamily. As to quaternary structure, homodimer. The tRNA molecule binds across the dimer.

It is found in the cytoplasm. It carries out the reaction tRNA(Ser) + L-serine + ATP = L-seryl-tRNA(Ser) + AMP + diphosphate + H(+). The enzyme catalyses tRNA(Sec) + L-serine + ATP = L-seryl-tRNA(Sec) + AMP + diphosphate + H(+). The protein operates within aminoacyl-tRNA biosynthesis; selenocysteinyl-tRNA(Sec) biosynthesis; L-seryl-tRNA(Sec) from L-serine and tRNA(Sec): step 1/1. Functionally, catalyzes the attachment of serine to tRNA(Ser). Is also able to aminoacylate tRNA(Sec) with serine, to form the misacylated tRNA L-seryl-tRNA(Sec), which will be further converted into selenocysteinyl-tRNA(Sec). This chain is Serine--tRNA ligase, found in Prochlorococcus marinus subsp. pastoris (strain CCMP1986 / NIES-2087 / MED4).